We begin with the raw amino-acid sequence, 88 residues long: Gas vesicle protein A2 (88 aa).

Belongs to the gas vesicle GvpA family. In terms of assembly, the gas vesicle shell is 2 nm thick and consists of a single layer of this protein. It forms helical ribs nearly perpendicular to the long axis of the vesicle.

The protein localises to the gas vesicle shell. Gas vesicles are hollow, gas filled proteinaceous nanostructures found in some microorganisms. During planktonic growth they allow positioning of the organism at a favorable depth for light or nutrient acquisition. GvpA forms the protein shell. Its function is as follows. It is not clear if the 2 type A proteins in this organism are functionally redundant. In terms of biological role, when a minimal gvp locus (gvpA2-gvpR-gvpN-gvpF-gvpG-gvpL-gvpS-gvpK-gvpJ-gvpT-gvpU, called pNL29) is expressed in E.coli gas vesicles are made. In Priestia megaterium (Bacillus megaterium), this protein is Gas vesicle protein A2.